The chain runs to 108 residues: Nucleoid-associated protein Bmul_1447/BMULJ_01796 (108 aa).

A disordered region spans residues 84–108; that stretch reads EATSQEKMSGMTSGLPLPPGFKLPF. The segment covering 85 to 95 has biased composition (polar residues); that stretch reads ATSQEKMSGMT. Over residues 99-108 the composition is skewed to pro residues; it reads PLPPGFKLPF.

This sequence belongs to the YbaB/EbfC family. In terms of assembly, homodimer.

The protein resides in the cytoplasm. The protein localises to the nucleoid. Functionally, binds to DNA and alters its conformation. May be involved in regulation of gene expression, nucleoid organization and DNA protection. The polypeptide is Nucleoid-associated protein Bmul_1447/BMULJ_01796 (Burkholderia multivorans (strain ATCC 17616 / 249)).